The primary structure comprises 918 residues: MPCAMLVAAAVEVAVPTLAEAAALGAIGAILAGPLMQPTKVRSPVRVRNSNLKCHGTKMRSPSMVSMSQSQRIKIPSYVGLSTVHTPALLTPVISSRSTRTFQKTAKTIQERSHAVMQIPEFTPGTGLRSTNAIQRTTEVLQRHSHVGLRQPHAGRLREMHTASGRPVIGLTPTIVSQKTTKVPKQPRFVARAIDNFSREVMNAIAVAHDEAQYIAHLTIGSTNILLSLISQYICIFLLEIILNKAYKMFRAAVRRATRGAKLATLMEYGTNLTKLAEEGKLDPVVGRQKQIDHVVQILSRRTKNNPCLIGEPGVGKTAIAEGLAQLIATGDVPETIQQKTVISLDMGLLLAGTKYRGELEERLKNILEEIKQNGEIILFLDEVHTLVTAGSAEGAIDAANIFKPALARGELQCIGATTINEYRKHIEKDAALERRFQPVKIPESTVDETVGILKGLRERYQGHHKVQYTDEALVAAAELSHKHIRDRFLPDKAIDLMDEAGSIVRLRNAQCKPSKKVNDLEAELKKTLKEKNDAISIQNFRRAKQLRDHELQLRTNISALTDKKTQMMEPDAIAMPVVTEDDVRHAISRWTGVPLHKVSMDESRKLLKLEEALHRRVVGQGEAVAAVSRAIRRARLGLKHPGRPVASLVFAGPTGVGKSELAKALAAYYYGSSESEEAAMVRLDMSEYMEKHAVARLVGSPPGYVWHGEGGQLTEAVRRRPHAVVLLDEVEKAHRDVFDLLLQVLDDGRLTDGKGRTVDFKNTLIVMTTNIGSSLIVNNGGDGAAAAGRIKNTVTDEMKRHFRPEFLNRLDEVIMFQPLTELEVGKIAGIMLEEFAGRVREKGIKLKVTDKFRELVVEEGFDPSYGARPLRRAVVRLLEDTLAEKMLAGEVREGDSVIVDADSAGNAVVRRSNAMPA.

The interval 266-515 (LMEYGTNLTK…RLRNAQCKPS (250 aa)) is i. ATP is bound by residues 311-318 (GEPGVGKT) and 653-660 (GPTGVGKS). The interval 579 to 774 (VTEDDVRHAI…LIVMTTNIGS (196 aa)) is II.

Belongs to the ClpA/ClpB family. ClpC subfamily.

Its subcellular location is the plastid. The protein resides in the chloroplast. Functionally, molecular chaperone that may interact with a ClpP-like protease involved in degradation of denatured proteins in the chloroplast. The protein is Chaperone protein ClpC4, chloroplastic (CPLC4) of Oryza sativa subsp. japonica (Rice).